A 430-amino-acid chain; its full sequence is MGNWTKSIEAFKEAQPLMPGGVNSPVRAFKSVGMNPVYMKEGKGAKIKDIDGNEYIDYVLSWGPLILGHANDVVVEELKKATELGTSFGAPHEYETRLAKLVIERVPSIDVVRMVNSGTEATMSALRLARGYTGRNKILKFVGCYHGHGDSLLIKAGSGVATLGLPDSPGVPESVAQNTLTVHYNDVESVRYVFETFGDDLAAVIVEPVAGNMGVVPPEPGFLETLRTWTEENGTLLIFDEVMTGFRVGYTCAQGEFGVTPDLTCLGKVIGGGLPVGAFGGKREIMEQIAPSGPIYQAGTLSGNPLAMTAGYYTLSQLTKADYSEFARKAERLEAGLSAAAKQHGIPHSINRAGSMIGLFFTDERVYNFEKAQTSDLDLFAAYFRGMLAEGISLAPSQFEGLFLSTAHSNEDIEATIAAAERVFQAIATK.

At K268 the chain carries N6-(pyridoxal phosphate)lysine.

The protein belongs to the class-III pyridoxal-phosphate-dependent aminotransferase family. HemL subfamily. Homodimer. It depends on pyridoxal 5'-phosphate as a cofactor.

It localises to the cytoplasm. The catalysed reaction is (S)-4-amino-5-oxopentanoate = 5-aminolevulinate. It functions in the pathway porphyrin-containing compound metabolism; protoporphyrin-IX biosynthesis; 5-aminolevulinate from L-glutamyl-tRNA(Glu): step 2/2. This is Glutamate-1-semialdehyde 2,1-aminomutase 2 from Shouchella clausii (strain KSM-K16) (Alkalihalobacillus clausii).